Reading from the N-terminus, the 184-residue chain is Orotate phosphoribosyltransferase (184 aa).

5-phospho-alpha-D-ribose 1-diphosphate is bound by residues arginine 99, lysine 100, lysine 103, histidine 105, and 125–133 (EDTTTTGNS). Threonine 129 and arginine 157 together coordinate orotate.

It belongs to the purine/pyrimidine phosphoribosyltransferase family. PyrE subfamily. As to quaternary structure, homodimer. It depends on Mg(2+) as a cofactor.

It carries out the reaction orotidine 5'-phosphate + diphosphate = orotate + 5-phospho-alpha-D-ribose 1-diphosphate. It participates in pyrimidine metabolism; UMP biosynthesis via de novo pathway; UMP from orotate: step 1/2. Its function is as follows. Catalyzes the transfer of a ribosyl phosphate group from 5-phosphoribose 1-diphosphate to orotate, leading to the formation of orotidine monophosphate (OMP). In Corynebacterium glutamicum (strain ATCC 13032 / DSM 20300 / JCM 1318 / BCRC 11384 / CCUG 27702 / LMG 3730 / NBRC 12168 / NCIMB 10025 / NRRL B-2784 / 534), this protein is Orotate phosphoribosyltransferase.